Reading from the N-terminus, the 299-residue chain is Glycine--tRNA ligase alpha subunit (299 aa).

The protein belongs to the class-II aminoacyl-tRNA synthetase family. In terms of assembly, tetramer of two alpha and two beta subunits.

Its subcellular location is the cytoplasm. The enzyme catalyses tRNA(Gly) + glycine + ATP = glycyl-tRNA(Gly) + AMP + diphosphate. The sequence is that of Glycine--tRNA ligase alpha subunit from Lactiplantibacillus plantarum (strain ATCC BAA-793 / NCIMB 8826 / WCFS1) (Lactobacillus plantarum).